We begin with the raw amino-acid sequence, 303 residues long: Probable 5-dehydro-4-deoxyglucarate dehydratase (303 aa).

The protein belongs to the DapA family.

The catalysed reaction is 5-dehydro-4-deoxy-D-glucarate + H(+) = 2,5-dioxopentanoate + CO2 + H2O. The protein operates within carbohydrate acid metabolism; D-glucarate degradation; 2,5-dioxopentanoate from D-glucarate: step 2/2. This Delftia acidovorans (strain DSM 14801 / SPH-1) protein is Probable 5-dehydro-4-deoxyglucarate dehydratase.